A 58-amino-acid chain; its full sequence is Alpha-conotoxin AuIB (58 aa).

Positions Met1–Ser16 are cleaved as a signal peptide. A propeptide spanning residues Phe17–Lys39 is cleaved from the precursor. 2 disulfides stabilise this stretch: Cys41-Cys47 and Cys42-Cys54. Position 54 is a cysteine amide (Cys54).

In terms of tissue distribution, expressed by the venom duct.

The protein localises to the secreted. Alpha-conotoxins act on postsynaptic membranes, they bind to the nicotinic acetylcholine receptors (nAChR) and thus inhibit them. This toxin blocks mammalian nAChR alpha-3-beta-4/CHRNA3-CHRNB4 subunits. Also exhibits inhibition of D.melanogaster alpha-7/CHRNA7 nAChRs. This chain is Alpha-conotoxin AuIB, found in Conus aulicus (Princely cone).